Reading from the N-terminus, the 575-residue chain is Flagellin B (575 aa).

It belongs to the bacterial flagellin family. In terms of assembly, heteromer of flaA and flaB.

The protein localises to the secreted. The protein resides in the bacterial flagellum. In terms of biological role, flagellin is the subunit protein which polymerizes to form the filaments of bacterial flagella. The polypeptide is Flagellin B (flaB) (Campylobacter jejuni).